Reading from the N-terminus, the 196-residue chain is Molybdenum cofactor guanylyltransferase (196 aa).

Residues 10-12, K23, N51, D69, and D99 each bind GTP; that span reads LAG. Residue D99 coordinates Mg(2+).

The protein belongs to the MobA family. Monomer. Mg(2+) serves as cofactor.

Its subcellular location is the cytoplasm. The enzyme catalyses Mo-molybdopterin + GTP + H(+) = Mo-molybdopterin guanine dinucleotide + diphosphate. In terms of biological role, transfers a GMP moiety from GTP to Mo-molybdopterin (Mo-MPT) cofactor (Moco or molybdenum cofactor) to form Mo-molybdopterin guanine dinucleotide (Mo-MGD) cofactor. In Shewanella baltica (strain OS155 / ATCC BAA-1091), this protein is Molybdenum cofactor guanylyltransferase.